The sequence spans 444 residues: Putative GTP cyclohydrolase URC1 (444 aa).

268–272 (RVHDE) contributes to the GTP binding site. The Zn(2+) site is built by Cys-273, Cys-284, and Cys-286. Residue 315 to 317 (EGR) participates in GTP binding. The Proton acceptor role is filled by Asp-353. Residue Arg-355 is the Nucleophile of the active site. Ser-377 and Lys-382 together coordinate GTP.

This sequence belongs to the GTP cyclohydrolase II family.

The protein localises to the cytoplasm. It is found in the nucleus. In terms of biological role, involved in uracil catabolism. This Lachancea kluyveri (Yeast) protein is Putative GTP cyclohydrolase URC1 (URC1).